The following is a 235-amino-acid chain: Probable inactive serine protease 37 (235 aa).

An N-terminal signal peptide occupies residues 1–19 (MKYVFYLGVLAGTFFFADS). In terms of domain architecture, Peptidase S1 spans 20-233 (SVQKEDPAPY…YVSWIENTAK (214 aa)). 3 disulfides stabilise this stretch: C40-C56, C131-C198, and C163-C177.

The protein belongs to the peptidase S1 family. As to expression, testis-specific. Expressed in spermatids (at protein level).

It is found in the cytoplasmic vesicle. The protein resides in the secretory vesicle. It localises to the acrosome. Its subcellular location is the secreted. In terms of biological role, plays a role in male fertility. May have a role in sperm migration or binding to zona-intact eggs. Involved in the activation of the proacrosin/acrosin system. In Homo sapiens (Human), this protein is Probable inactive serine protease 37.